The chain runs to 490 residues: Cytochrome P450 2C54 (490 aa).

Residue Ser127 is modified to Phosphoserine. N6-acetyllysine occurs at positions 252 and 375. Cys435 serves as a coordination point for heme.

Belongs to the cytochrome P450 family. Heme serves as cofactor. Expressed in liver.

Its subcellular location is the endoplasmic reticulum membrane. It is found in the microsome membrane. It carries out the reaction an organic molecule + reduced [NADPH--hemoprotein reductase] + O2 = an alcohol + oxidized [NADPH--hemoprotein reductase] + H2O + H(+). Metabolizes arachidonic acid mainly to 12-hydroxyeicosatetraenoic acid (HETE). The sequence is that of Cytochrome P450 2C54 from Mus musculus (Mouse).